We begin with the raw amino-acid sequence, 257 residues long: Protein YIPF5 (257 aa).

Residues 1-124 are Cytoplasmic-facing; sequence MSGFENLNTD…KVADGSIMNE (124 aa). The interaction with Sec23 stretch occupies residues 75-106; that stretch reads PASPQPFYGNSFEDEPPLLEELGINFDHIWQK. The helical transmembrane segment at 125-145 threads the bilayer; the sequence is TDLAGPMVFCLAFGATLLLAG. Residue Lys146 is a topological domain, lumenal. A helical transmembrane segment spans residues 147–167; the sequence is IQFGYVYGISAIGCLGMFCLL. Residues 168-173 lie on the Cytoplasmic side of the membrane; the sequence is NLMSMT. Residues 174 to 194 form a helical membrane-spanning segment; it reads GVSFGCVASVLGYCLLPMILL. At 195–196 the chain is on the lumenal side; the sequence is SS. A helical transmembrane segment spans residues 197–217; it reads FAVIFSLQGMVGIILTAGIIG. Residues 218-236 are Cytoplasmic-facing; that stretch reads WCSFSASKIFISALAMEGQ. A helical membrane pass occupies residues 237–257; the sequence is QLLVAYPCALLYGVFALISVF.

The protein belongs to the YIP1 family. As to quaternary structure, interacts with the COPII coat components Sec23 (SEC23A and/or SEC23B) and Sec24 (SEC24A and/or SEC24B). Interacts with YIF1A. May interact with RAB1A. Interacts with YIPF3 and YIPF4.

It localises to the endoplasmic reticulum membrane. The protein localises to the golgi apparatus. It is found in the cis-Golgi network membrane. The protein resides in the cytoplasmic vesicle. Its subcellular location is the COPII-coated vesicle. In terms of biological role, plays a role in transport between endoplasmic reticulum and Golgi. In pancreatic beta cells, required to transport proinsulin from endoplasmic reticulum into the Golgi. In Macaca fascicularis (Crab-eating macaque), this protein is Protein YIPF5 (YIPF5).